The following is a 416-amino-acid chain: UDP-N-acetylmuramoylalanine--D-glutamate ligase (416 aa).

An ATP-binding site is contributed by Gly-104–Thr-110.

The protein belongs to the MurCDEF family.

Its subcellular location is the cytoplasm. The catalysed reaction is UDP-N-acetyl-alpha-D-muramoyl-L-alanine + D-glutamate + ATP = UDP-N-acetyl-alpha-D-muramoyl-L-alanyl-D-glutamate + ADP + phosphate + H(+). It functions in the pathway cell wall biogenesis; peptidoglycan biosynthesis. In terms of biological role, cell wall formation. Catalyzes the addition of glutamate to the nucleotide precursor UDP-N-acetylmuramoyl-L-alanine (UMA). The sequence is that of UDP-N-acetylmuramoylalanine--D-glutamate ligase from Francisella tularensis subsp. tularensis (strain WY96-3418).